The chain runs to 321 residues: Lipoyl synthase (321 aa).

The [4Fe-4S] cluster site is built by Cys68, Cys73, Cys79, Cys94, Cys98, Cys101, and Ser308. The Radical SAM core domain maps to 80 to 297 (FNHGTATFMI…KALADELGFT (218 aa)).

The protein belongs to the radical SAM superfamily. Lipoyl synthase family. The cofactor is [4Fe-4S] cluster.

It localises to the cytoplasm. It catalyses the reaction [[Fe-S] cluster scaffold protein carrying a second [4Fe-4S](2+) cluster] + N(6)-octanoyl-L-lysyl-[protein] + 2 oxidized [2Fe-2S]-[ferredoxin] + 2 S-adenosyl-L-methionine + 4 H(+) = [[Fe-S] cluster scaffold protein] + N(6)-[(R)-dihydrolipoyl]-L-lysyl-[protein] + 4 Fe(3+) + 2 hydrogen sulfide + 2 5'-deoxyadenosine + 2 L-methionine + 2 reduced [2Fe-2S]-[ferredoxin]. The protein operates within protein modification; protein lipoylation via endogenous pathway; protein N(6)-(lipoyl)lysine from octanoyl-[acyl-carrier-protein]: step 2/2. Its function is as follows. Catalyzes the radical-mediated insertion of two sulfur atoms into the C-6 and C-8 positions of the octanoyl moiety bound to the lipoyl domains of lipoate-dependent enzymes, thereby converting the octanoylated domains into lipoylated derivatives. This is Lipoyl synthase from Shewanella oneidensis (strain ATCC 700550 / JCM 31522 / CIP 106686 / LMG 19005 / NCIMB 14063 / MR-1).